The primary structure comprises 501 residues: Pentatricopeptide repeat-containing protein At4g14190, chloroplastic (501 aa).

The N-terminal 88 residues, 1 to 88, are a transit peptide targeting the chloroplast; that stretch reads MENLTTAQFL…SGSCPLRLLQ (88 aa). PPR repeat units follow at residues 130–160, 166–200, 201–235, 236–270, and 271–305; these read SENN…MIDD, SLEI…GLLP, ITET…GCVR, DHVT…KMTL, and EPST…GISL.

This sequence belongs to the PPR family. P subfamily.

It localises to the plastid. Its subcellular location is the chloroplast. This Arabidopsis thaliana (Mouse-ear cress) protein is Pentatricopeptide repeat-containing protein At4g14190, chloroplastic.